The primary structure comprises 209 residues: PRA1 family protein A3 (209 aa).

4 consecutive transmembrane segments (helical) span residues 51-72 (LYYY…ALIT), 76-98 (AILG…AATF), 143-163 (LVFV…SCGL), and 164-184 (LWVL…ASLR).

The protein belongs to the PRA1 family.

It is found in the endosome membrane. In terms of biological role, may be involved in both secretory and endocytic intracellular trafficking in the endosomal/prevacuolar compartments. In Arabidopsis thaliana (Mouse-ear cress), this protein is PRA1 family protein A3 (PRA1A3).